The following is an 89-amino-acid chain: Small ribosomal subunit protein uS15 (89 aa).

This sequence belongs to the universal ribosomal protein uS15 family. In terms of assembly, part of the 30S ribosomal subunit. Forms a bridge to the 50S subunit in the 70S ribosome, contacting the 23S rRNA.

Functionally, one of the primary rRNA binding proteins, it binds directly to 16S rRNA where it helps nucleate assembly of the platform of the 30S subunit by binding and bridging several RNA helices of the 16S rRNA. In terms of biological role, forms an intersubunit bridge (bridge B4) with the 23S rRNA of the 50S subunit in the ribosome. The protein is Small ribosomal subunit protein uS15 of Nitrosospira multiformis (strain ATCC 25196 / NCIMB 11849 / C 71).